Reading from the N-terminus, the 1044-residue chain is Pre-mRNA-splicing factor ATP-dependent RNA helicase DHX16 (1044 aa).

2 disordered regions span residues 101-210 (EDSE…AYEE) and 374-394 (LQGN…QKES). A phosphoserine mark is found at Ser-103, Ser-106, and Ser-107. The span at 119 to 130 (QKKRKKRKHLRK) shows a compositional bias: basic residues. Residues 134–143 (EEEEEEEEEA) show a composition bias toward acidic residues. The residue at position 163 (Ser-163) is a Phosphoserine. Positions 169-210 (RTERERLQDLEERDAFAERVRQRDKDRTRNVLERSDKKAYEE) are enriched in basic and acidic residues. The region spanning 412-576 (LAAIANHQVL…FDDAPVFRIP (165 aa)) is the Helicase ATP-binding domain. Residue 425 to 432 (GETGSGKT) coordinates ATP. Positions 523-526 (DEAH) match the DEAH box motif. The Helicase C-terminal domain maps to 601 to 774 (SVLQIHVTQP…NVVLLLKSLG (174 aa)). Thr-715 is subject to Phosphothreonine.

It belongs to the DEAD box helicase family. DEAH subfamily. DDX16/PRP8 sub-subfamily. In terms of assembly, component of pre-catalytic spliceosome complexes. Component of the minor spliceosome, which splices U12-type introns. Interacts with GPKOW. Interacts with TRIM6. Interacts with RIGI.

Its subcellular location is the nucleus. It is found in the nucleoplasm. The protein resides in the cytoplasm. It carries out the reaction ATP + H2O = ADP + phosphate + H(+). Its function is as follows. Required for pre-mRNA splicing as a component of the spliceosome. Contributes to pre-mRNA splicing after spliceosome formation and prior to the first transesterification reaction. As a component of the minor spliceosome, involved in the splicing of U12-type introns in pre-mRNAs. Also plays a role in innate antiviral response by acting as a pattern recognition receptor sensing splicing signals in viral RNA. Mechanistically, TRIM6 promotes the interaction between unanchored 'Lys-48'-polyubiquitin chains and DHX16, leading to DHX16 interaction with RIGI and ssRNA to amplify RIGI-dependent innate antiviral immune responses. The polypeptide is Pre-mRNA-splicing factor ATP-dependent RNA helicase DHX16 (DHX16) (Pan troglodytes (Chimpanzee)).